The sequence spans 188 residues: Elongation factor P (188 aa).

This sequence belongs to the elongation factor P family.

It localises to the cytoplasm. It functions in the pathway protein biosynthesis; polypeptide chain elongation. Its function is as follows. Involved in peptide bond synthesis. Stimulates efficient translation and peptide-bond synthesis on native or reconstituted 70S ribosomes in vitro. Probably functions indirectly by altering the affinity of the ribosome for aminoacyl-tRNA, thus increasing their reactivity as acceptors for peptidyl transferase. The sequence is that of Elongation factor P from Bdellovibrio bacteriovorus (strain ATCC 15356 / DSM 50701 / NCIMB 9529 / HD100).